The primary structure comprises 255 residues: Uridylate kinase (255 aa).

22-25 provides a ligand contact to ATP; the sequence is KLSG. Residues 30–35 form an involved in allosteric activation by GTP region; that stretch reads GNGGYG. Gly64 is a binding site for UMP. 2 residues coordinate ATP: Gly65 and Arg69. UMP-binding positions include Asp85 and 146-153; that span reads TGNPFFTT. The ATP site is built by Asn174, Tyr180, and Asp183.

The protein belongs to the UMP kinase family. Homohexamer.

It is found in the cytoplasm. It carries out the reaction UMP + ATP = UDP + ADP. It functions in the pathway pyrimidine metabolism; CTP biosynthesis via de novo pathway; UDP from UMP (UMPK route): step 1/1. Its activity is regulated as follows. Allosterically activated by GTP. Inhibited by UTP. Its function is as follows. Catalyzes the reversible phosphorylation of UMP to UDP. This is Uridylate kinase from Rubrobacter xylanophilus (strain DSM 9941 / JCM 11954 / NBRC 16129 / PRD-1).